Here is a 150-residue protein sequence, read N- to C-terminus: 15 kDa calcium-binding protein (150 aa).

A1 is subject to N-acetylalanine. 4 EF-hand domains span residues 7–42 (TDAE…AGKS), 43–78 (FSEE…KMMK), 81–116 (WKKS…RIEP), and 118–150 (MSKE…IKSS). Residues D22, D24, S26, T28, D56, D58, S60, T62, E67, D94, D96, N98, E105, D131, D133, D135, K137, and E142 each coordinate Ca(2+).

The protein localises to the nucleus. The protein resides in the cytoplasm. Its subcellular location is the cytoskeleton. It is found in the spindle. Functionally, may play an important role in mitosis of sea urchin egg. May function as a Ca(2+)-dependent intracellular modulator of microtubule assembly. In Hemicentrotus pulcherrimus (Sea urchin), this protein is 15 kDa calcium-binding protein.